The following is a 376-amino-acid chain: Peroxisomal targeting signal 2 receptor (376 aa).

WD repeat units follow at residues 58–98 (DTQD…YPVM), 102–142 (EHQR…NTSL), 182–222 (DNND…PLFM), 226–267 (AHNG…PNVH), 279–319 (GHEF…TSRV), and 339–376 (AHTE…QRLQ).

It belongs to the WD repeat peroxin-7 family. As to quaternary structure, interacts with PEX20. Polyubiquitinated, leading to its degradation by the proteasome. Ubiquitination is dependent of PEX5 and PEX20 and takes place following recycling into the cytosol.

It localises to the cytoplasm. The protein resides in the cytosol. The protein localises to the peroxisome matrix. Receptor required for the peroxisomal import of proteins containing a C-terminal PTS2-type peroxisomal targeting signal, such as 3-oxoacyl-CoA thiolase. Specifically binds to cargo proteins containing a PTS2 peroxisomal targeting signal in the cytosol. Cargo protein-binding triggers interaction with PEX20 and formation of a ternary complex composed of PEX20 and PEX7 along with PTS2-containing cargo proteins, which is tranlocated into peroxisomes by passing through the peroxisomal docking complex. PEX7 receptor is then retrotranslocated into the cytosol, where it is ubiquitinated and degraded. This Komagataella phaffii (strain GS115 / ATCC 20864) (Yeast) protein is Peroxisomal targeting signal 2 receptor.